Reading from the N-terminus, the 78-residue chain is Large ribosomal subunit protein bL28 (78 aa).

Belongs to the bacterial ribosomal protein bL28 family.

In Synechococcus sp. (strain JA-2-3B'a(2-13)) (Cyanobacteria bacterium Yellowstone B-Prime), this protein is Large ribosomal subunit protein bL28.